Reading from the N-terminus, the 594-residue chain is UvrABC system protein C (594 aa).

One can recognise a GIY-YIG domain in the interval 13–99; the sequence is NGSGVYQYFD…IKQLKPKYNI (87 aa). The 36-residue stretch at 205–240 folds into the UVR domain; the sequence is DKLIKELQLKMDRLSSNLRFEEALIYRDRISKIQKI.

Belongs to the UvrC family. Interacts with UvrB in an incision complex.

The protein localises to the cytoplasm. The UvrABC repair system catalyzes the recognition and processing of DNA lesions. UvrC both incises the 5' and 3' sides of the lesion. The N-terminal half is responsible for the 3' incision and the C-terminal half is responsible for the 5' incision. The sequence is that of UvrABC system protein C from Helicobacter acinonychis (strain Sheeba).